The chain runs to 666 residues: Non-receptor tyrosine-protein kinase TNK1 (666 aa).

A phosphoserine mark is found at serine 60 and serine 96. One can recognise a Protein kinase domain in the interval 116–377 (VCRGELLGSG…PSFSHLEGLL (262 aa)). Residues 122 to 130 (LGSGCFGVV) and lysine 148 contribute to the ATP site. Catalysis depends on aspartate 245, which acts as the Proton acceptor. Residues serine 255 and serine 411 each carry the phosphoserine modification. Residues 380-445 (AGPSEACCVR…PASAVTLADA (66 aa)) form the SH3 domain. Positions 446 to 493 (GGLPATRPVHRGTPARGDQHPGSIDGDRKKANLWDAPPARGQRRNMPL) are disordered. A Phosphoserine modification is found at serine 502. The interval 506 to 579 (VLSLGPRPTG…MGMPGARKAA (74 aa)) is disordered. Phosphothreonine is present on threonine 514. Serine 519 is modified (phosphoserine). A compositionally biased stretch (pro residues) spans 531 to 541 (QGPPGLPPRPP). Positions 542–552 (LSSSSPQPSQP) are enriched in low complexity. A Phosphoserine modification is found at serine 582.

The protein belongs to the protein kinase superfamily. Tyr protein kinase family. Interacts with the SH3 domain of PLCG1 via its Pro-rich domain. Post-translationally, autophosphorylated on tyrosine residues. In terms of tissue distribution, expressed in all umbilical cord blood, bone marrow and adult blood cell sub-populations and in several leukemia cell lines. Highly expressed in fetal blood, brain, lung, liver and kidney. Detected at lower levels in adult prostate, testis, ovary, small intestine and colon. Not expressed in adult lung, liver, kidney or brain.

Its subcellular location is the cytoplasm. It is found in the membrane. It catalyses the reaction L-tyrosyl-[protein] + ATP = O-phospho-L-tyrosyl-[protein] + ADP + H(+). Involved in negative regulation of cell growth. Has tumor suppressor properties. Plays a negative regulatory role in the Ras-MAPK pathway. May function in signaling pathways utilized broadly during fetal development and more selectively in adult tissues and in cells of the lymphohematopoietic system. Could specifically be involved in phospholipid signal transduction. This Homo sapiens (Human) protein is Non-receptor tyrosine-protein kinase TNK1.